Consider the following 204-residue polypeptide: ATP-dependent Clp protease proteolytic subunit (204 aa).

Catalysis depends on serine 101, which acts as the Nucleophile. Histidine 126 is a catalytic residue.

The protein belongs to the peptidase S14 family. As to quaternary structure, component of the chloroplastic Clp protease core complex.

It is found in the plastid. The protein resides in the chloroplast stroma. The enzyme catalyses Hydrolysis of proteins to small peptides in the presence of ATP and magnesium. alpha-casein is the usual test substrate. In the absence of ATP, only oligopeptides shorter than five residues are hydrolyzed (such as succinyl-Leu-Tyr-|-NHMec, and Leu-Tyr-Leu-|-Tyr-Trp, in which cleavage of the -Tyr-|-Leu- and -Tyr-|-Trp bonds also occurs).. Its function is as follows. Cleaves peptides in various proteins in a process that requires ATP hydrolysis. Has a chymotrypsin-like activity. Plays a major role in the degradation of misfolded proteins. The polypeptide is ATP-dependent Clp protease proteolytic subunit (Phalaenopsis aphrodite subsp. formosana (Moth orchid)).